A 577-amino-acid polypeptide reads, in one-letter code: BAG family molecular chaperone regulator 3 (577 aa).

Positions 1 to 17 (MSAATQSPMMQMASGNG) are enriched in polar residues. Disordered stretches follow at residues 1 to 81 (MSAA…LLPI), 126 to 207 (TEAA…SHQL), and 229 to 427 (PSFH…HPGV). At serine 2 the chain carries N-acetylserine. WW domains are found at residues 22–56 (DPLP…DPRV) and 126–157 (TEAA…CGQM). Serine 138 bears the Phosphoserine mark. Arginine 141 bears the Omega-N-methylarginine mark. A compositionally biased stretch (low complexity) spans 158-204 (PATATTAAAQPPTAHGPERSQSPAASDCSSSSSSASLPSSGRSSLGS). Phosphoserine occurs at positions 179 and 204. Basic and acidic residues predominate over residues 256 to 265 (IQGDDWEPRP). The residue at position 267 (arginine 267) is an Omega-N-methylarginine. 3 positions are modified to phosphoserine: serine 280, serine 281, and serine 285. The residue at position 291 (threonine 291) is a Phosphothreonine. Residue serine 297 is modified to Phosphoserine. 2 stretches are compositionally biased toward pro residues: residues 332-341 (PAGPDLPPGH) and 376-392 (IPCP…PSPP). Residues serine 380, serine 382, and serine 390 each carry the phosphoserine modification. Residues 426–503 (GVLKVEAILE…TILEKLEQKA (78 aa)) enclose the BAG domain. A Glycyl lysine isopeptide (Lys-Gly) (interchain with G-Cter in SUMO1); alternate cross-link involves residue lysine 450. A Glycyl lysine isopeptide (Lys-Gly) (interchain with G-Cter in SUMO2); alternate cross-link involves residue lysine 450. Residues 524-577 (QPLQEIMGAVVADKDKKGPENKDPQTESQQLEAKAATPPNPSNPADSAGNLVAP) form a disordered region. Over residues 535 to 548 (ADKDKKGPENKDPQ) the composition is skewed to basic and acidic residues.

As to quaternary structure, forms a ternary complex with HSPA1A/HSP70 and HSPB8, serving as scaffold subunit. Component of the chaperone-assisted selective autophagy (CASA) complex consisting of BAG3, HSPA8/HSC70, HSPB8 and STUB1/CHIP. Binds to the ATPase domain of HSP70 chaperones. Interacts with BCL2. Interacts with phospholipase C-gamma proteins. Interacts with DNAJB1 and DNAJB6. Interacts (via BAG domain) with HSF1; this interaction occurs in normal and heat-shocked cells. Interacts with HSPA8/HSC70 (via NBD), HSPA1A (via NBD) and HSPA1B (via NBD). Interacts (via WW domain 1) with SYNPO2 (via PPPY motif). Interacts with HSPB8.

Its subcellular location is the nucleus. The protein resides in the cytoplasm. In terms of biological role, co-chaperone and adapter protein that connects different classes of molecular chaperones including heat shock proteins 70 (HSP70s), e.g. HSPA1A/HSP70 or HSPA8/HSC70, and small heat shock proteins (sHSPs), e.g. HSPB8. Acts as a nucleotide-exchange factor (NEF) promoting the release of ADP from HSP70s, thereby triggering client protein release. Nucleotide release is mediated via BAG3 binding to the nucleotide-binding domain (NBD) of HSP70s, whereas client release is mediated via its binding to the substrate-binding domain (SBD). Has anti-apoptotic activity. Plays a role in the HSF1 nucleocytoplasmic transport. In Mus musculus (Mouse), this protein is BAG family molecular chaperone regulator 3 (Bag3).